A 204-amino-acid polypeptide reads, in one-letter code: Large ribosomal subunit protein uL4 (204 aa).

The tract at residues 49–75 is disordered; that stretch reads TKGRSDVSGGGKKPWRQKGRGGARAGS.

Belongs to the universal ribosomal protein uL4 family. Part of the 50S ribosomal subunit.

Its function is as follows. One of the primary rRNA binding proteins, this protein initially binds near the 5'-end of the 23S rRNA. It is important during the early stages of 50S assembly. It makes multiple contacts with different domains of the 23S rRNA in the assembled 50S subunit and ribosome. Functionally, forms part of the polypeptide exit tunnel. This chain is Large ribosomal subunit protein uL4, found in Campylobacter jejuni subsp. doylei (strain ATCC BAA-1458 / RM4099 / 269.97).